Reading from the N-terminus, the 94-residue chain is Large ribosomal subunit protein eL14 (94 aa).

This sequence belongs to the eukaryotic ribosomal protein eL14 family.

This is Large ribosomal subunit protein eL14 from Methanopyrus kandleri (strain AV19 / DSM 6324 / JCM 9639 / NBRC 100938).